Consider the following 252-residue polypeptide: Indole-3-glycerol phosphate synthase (252 aa).

This sequence belongs to the TrpC family.

It carries out the reaction 1-(2-carboxyphenylamino)-1-deoxy-D-ribulose 5-phosphate + H(+) = (1S,2R)-1-C-(indol-3-yl)glycerol 3-phosphate + CO2 + H2O. The protein operates within amino-acid biosynthesis; L-tryptophan biosynthesis; L-tryptophan from chorismate: step 4/5. The chain is Indole-3-glycerol phosphate synthase from Listeria monocytogenes serovar 1/2a (strain ATCC BAA-679 / EGD-e).